The sequence spans 272 residues: Cell division protein ZipA (272 aa).

The Periplasmic segment spans residues 1-4 (METH). The helical transmembrane segment at 5-25 (ILFFILAGLLIAVLIGYSIWS) threads the bilayer. Over 26–272 (ARREKSRIFS…RQNYLLRVAN (247 aa)) the chain is Cytoplasmic.

It belongs to the ZipA family. In terms of assembly, interacts with FtsZ via their C-terminal domains.

It is found in the cell inner membrane. Essential cell division protein that stabilizes the FtsZ protofilaments by cross-linking them and that serves as a cytoplasmic membrane anchor for the Z ring. Also required for the recruitment to the septal ring of downstream cell division proteins. In Glaesserella parasuis serovar 5 (strain SH0165) (Haemophilus parasuis), this protein is Cell division protein ZipA.